A 204-amino-acid chain; its full sequence is Tumor necrosis factor receptor superfamily member 26 (204 aa).

A signal peptide spans 1–19 (MTRLRLLLLLGLLLRVAVC). Residues 20–164 (SVNTITLCKI…SQCFCFSKPL (145 aa)) are Extracellular-facing. Cystine bridges form between cysteine 27–cysteine 38, cysteine 39–cysteine 52, cysteine 42–cysteine 61, cysteine 64–cysteine 79, cysteine 82–cysteine 95, cysteine 85–cysteine 103, cysteine 105–cysteine 120, cysteine 123–cysteine 135, and cysteine 126–cysteine 143. TNFR-Cys repeat units follow at residues 27-61 (CKIG…KSEC), 63-103 (PCDS…DRVC), and 104-143 (QCKQ…DTVC). Asparagine 57 carries an N-linked (GlcNAc...) asparagine glycan. Asparagine 136 carries N-linked (GlcNAc...) asparagine glycosylation. Residues 165–185 (GIVVIIAAFIIIIGAVIILIL) form a helical membrane-spanning segment. Residues 186–204 (KIICYCKRGENIQLSSTML) lie on the Cytoplasmic side of the membrane.

As to expression, expressed in thymus and spleen. Detectable levels in lung.

The protein resides in the membrane. The chain is Tumor necrosis factor receptor superfamily member 26 (Tnfrsf26) from Mus musculus (Mouse).